The sequence spans 149 residues: Ribosome maturation factor RimP (149 aa).

Belongs to the RimP family.

It localises to the cytoplasm. Its function is as follows. Required for maturation of 30S ribosomal subunits. This Neisseria meningitidis serogroup A / serotype 4A (strain DSM 15465 / Z2491) protein is Ribosome maturation factor RimP.